The primary structure comprises 298 residues: Putative olfactory receptor 10D4 (298 aa).

Residues 1-23 are Extracellular-facing; sequence MRNHTMVTEFILLGIPETEGLET. Residue Asn3 is glycosylated (N-linked (GlcNAc...) asparagine). The chain crosses the membrane as a helical span at residues 24–44; that stretch reads ALLFLFSSFYLCTLLGNVLIL. The Cytoplasmic portion of the chain corresponds to 45–52; that stretch reads TAIISSTR. A helical transmembrane segment spans residues 53 to 73; sequence LHTPMYFFLGNLSIFDLGFSS. Residues 74-97 are Extracellular-facing; it reads TTVPKMLFYLSGNSHAISYAGCVS. Cysteines 95 and 187 form a disulfide. The chain crosses the membrane as a helical span at residues 98–118; it reads QLFFYHFLGCTECFLYTVMAC. The Cytoplasmic portion of the chain corresponds to 119–137; it reads DRFVAICFPLRYTVIMNHR. A helical membrane pass occupies residues 138–158; the sequence is VCFMLATGTWMIGCVHAMILT. Residues 159–195 are Extracellular-facing; the sequence is PLTFQLPYCGPNKVGYYFCDIPAVLPLACKDTSLAQR. Residues 196 to 215 traverse the membrane as a helical segment; that stretch reads VGFTNVGLLSLICFFLILVS. Residues 216-235 lie on the Cytoplasmic side of the membrane; it reads YTCIGISISKIRSAEGRQRA. Residues 236–256 traverse the membrane as a helical segment; sequence FSTCSAHLTAILCAYGPVIVI. Over 257–267 the chain is Extracellular; the sequence is YLQPNPSALLG. Residues 268–288 form a helical membrane-spanning segment; sequence SIIQILNNLVTPMLNPLIYSL. Residues 289–298 are Cytoplasmic-facing; the sequence is RNKDVKSDQP.

The protein belongs to the G-protein coupled receptor 1 family.

It localises to the cell membrane. Its function is as follows. Odorant receptor. The chain is Putative olfactory receptor 10D4 (OR10D4P) from Homo sapiens (Human).